Consider the following 645-residue polypeptide: Alkyldihydroxyacetonephosphate synthase, peroxisomal (645 aa).

A compositionally biased stretch (low complexity) spans 1 to 10; the sequence is MAEAAAGEAG. The N-terminal 45 residues, 1–45, are a transit peptide targeting the peroxisome; it reads MAEAAAGEAGASERDPDAGRARRRLRVLSGHLLGRPQEAPSTNEC. Residues 1–72 are disordered; that stretch reads MAEAAAGEAG…AAPESGTIPK (72 aa). Residues 11-20 show a composition bias toward basic and acidic residues; that stretch reads ASERDPDAGR. Residues 50-69 show a composition bias toward low complexity; it reads AASAAGASPAATPAAPESGT. Residues Ser52 and Ser57 each carry the phosphoserine modification. The residue at position 61 (Thr61) is a Phosphothreonine. Lys89 carries the N6-acetyllysine modification. In terms of domain architecture, FAD-binding PCMH-type spans 189 to 371; that stretch reads FERIPDIVVW…TEATIKIRPT (183 aa). FAD-binding positions include 221–227, 290–296, and 303–306; these read PIGGGTS, DSLEFST, and TRAS. Lys334 is subject to N6-acetyllysine. Residue 355-361 coordinates FAD; sequence EGTLGVI. Arg502 serves as a coordination point for substrate. The active-site Proton donor/acceptor is the Tyr565. Important for enzyme activity stretches follow at residues 602 to 604 and 641 to 645; these read HHH and NRNLL.

Belongs to the FAD-binding oxidoreductase/transferase type 4 family. In terms of assembly, homodimer. Requires FAD as cofactor.

The protein resides in the peroxisome membrane. The protein localises to the peroxisome. It carries out the reaction a long chain fatty alcohol + a 1-acylglycerone 3-phosphate = a 1-O-alkylglycerone 3-phosphate + a long-chain fatty acid + H(+). The enzyme catalyses hexadecan-1-ol + 1-hexadecanoylglycerone 3-phosphate = 1-O-hexadecylglycerone 3-phosphate + hexadecanoate + H(+). It catalyses the reaction 1-hexadecanoylglycerone 3-phosphate + a long-chain fatty acid = a 1-acylglycerone 3-phosphate + hexadecanoate. The protein operates within glycerolipid metabolism; ether lipid biosynthesis. Catalyzes the exchange of the acyl chain in acyl-dihydroxyacetonephosphate (acyl-DHAP) for a long chain fatty alcohol, yielding the first ether linked intermediate, i.e. alkyl-dihydroxyacetonephosphate (alkyl-DHAP), in the pathway of ether lipid biosynthesis. This is Alkyldihydroxyacetonephosphate synthase, peroxisomal (Agps) from Mus musculus (Mouse).